A 338-amino-acid polypeptide reads, in one-letter code: Activator of 90 kDa heat shock protein ATPase homolog 1 (338 aa).

Position 3 is an N6-acetyllysine (K3). Residue K182 forms a Glycyl lysine isopeptide (Lys-Gly) (interchain with G-Cter in SUMO1) linkage. S193 carries the post-translational modification Phosphoserine. K203 is covalently cross-linked (Glycyl lysine isopeptide (Lys-Gly) (interchain with G-Cter in SUMO2)). N6-acetyllysine is present on K212. Position 223 is a phosphotyrosine; by ABL (Y223). S258 is subject to Phosphoserine.

It belongs to the AHA1 family. As to quaternary structure, interacts with HSPCA/HSP90. Interacts (phosphorylated on Tyr-223) with HSP90AA1; the interaction activates HSP90AA1 ATPase activity. Interacts with HSP90AB1. Interacts with GCH1. Interacts with SRPK1. Interacts with FLCN. (Microbial infection) Interacts with vesicular stomatitis virus glycoprotein (VSV G) (via cytoplasmic tail). Post-translationally, phosphorylation at Tyr-223 enhances binding to chaperone HSP90AA1. In terms of tissue distribution, expressed in numerous tissues, including brain, heart, skeletal muscle and kidney and, at lower levels, liver and placenta.

It localises to the cytoplasm. Its subcellular location is the cytosol. It is found in the endoplasmic reticulum. Its function is as follows. Acts as a co-chaperone of HSP90AA1. Activates the ATPase activity of HSP90AA1 leading to increase in its chaperone activity. Competes with the inhibitory co-chaperone FNIP1 for binding to HSP90AA1, thereby providing a reciprocal regulatory mechanism for chaperoning of client proteins. Competes with the inhibitory co-chaperone TSC1 for binding to HSP90AA1, thereby providing a reciprocal regulatory mechanism for chaperoning of client proteins. The protein is Activator of 90 kDa heat shock protein ATPase homolog 1 (AHSA1) of Homo sapiens (Human).